Here is a 332-residue protein sequence, read N- to C-terminus: DNA-directed RNA polymerase subunit alpha (332 aa).

The alpha N-terminal domain (alpha-NTD) stretch occupies residues methionine 1–threonine 234. The tract at residues valine 248–glycine 332 is alpha C-terminal domain (alpha-CTD).

This sequence belongs to the RNA polymerase alpha chain family. Homodimer. The RNAP catalytic core consists of 2 alpha, 1 beta, 1 beta' and 1 omega subunit. When a sigma factor is associated with the core the holoenzyme is formed, which can initiate transcription.

It catalyses the reaction RNA(n) + a ribonucleoside 5'-triphosphate = RNA(n+1) + diphosphate. DNA-dependent RNA polymerase catalyzes the transcription of DNA into RNA using the four ribonucleoside triphosphates as substrates. The chain is DNA-directed RNA polymerase subunit alpha from Xylella fastidiosa (strain M12).